The sequence spans 126 residues: Protein ApaG (126 aa).

The region spanning 2–126 is the ApaG domain; that stretch reads SFPIDSIKIK…FRLAMPGVMQ (125 aa).

In Shewanella denitrificans (strain OS217 / ATCC BAA-1090 / DSM 15013), this protein is Protein ApaG.